Here is a 448-residue protein sequence, read N- to C-terminus: Guanine deaminase (448 aa).

2 residues coordinate Zn(2+): His-74 and His-76. Substrate contacts are provided by residues 76 to 79, 204 to 205, 231 to 234, and Asp-319; these read HAPQ, RF, and HISE. Zn(2+) contacts are provided by His-231 and Asp-319.

It belongs to the metallo-dependent hydrolases superfamily. ATZ/TRZ family. The cofactor is Zn(2+).

It catalyses the reaction guanine + H2O + H(+) = xanthine + NH4(+). The protein operates within purine metabolism; guanine degradation; xanthine from guanine: step 1/1. With respect to regulation, strongly inhibited by p-chloromercuribenzoate (PCMB). Potassium cyanide (KCN) strongly inhibits activity towards 7,8-dihydropterin but has almost no effect on activity towards guanine. Pterin inhibits activity towards guanine but has little effect on activity towards 7,8-dihydropterin. Functionally, catalyzes the hydrolytic deamination of guanine, producing xanthine and ammonia. Also has 7,8-dihydropterin deaminase activity, which plays a role in synthesis of the red eye pigment aurodrosopterin. The protein is Guanine deaminase of Drosophila melanogaster (Fruit fly).